We begin with the raw amino-acid sequence, 103 residues long: uncharacterized protein (103 aa).

This is an uncharacterized protein from Caenorhabditis elegans.